Here is a 211-residue protein sequence, read N- to C-terminus: Large ribosomal subunit protein bL9 (211 aa).

Positions 183–211 are disordered; that stretch reads AAASEDEELAETAGVAPAEPSEEDDSAKA. Acidic residues predominate over residues 202-211; the sequence is PSEEDDSAKA.

The protein belongs to the bacterial ribosomal protein bL9 family.

Functionally, binds to the 23S rRNA. The sequence is that of Large ribosomal subunit protein bL9 from Roseobacter denitrificans (strain ATCC 33942 / OCh 114) (Erythrobacter sp. (strain OCh 114)).